The following is a 579-amino-acid chain: Probable pectinesterase/pectinesterase inhibitor 7 (579 aa).

Residues 1–20 (MESPIFILITLSFFLQSVLA) form the signal peptide. A pectinesterase inhibitor 7 region spans residues 22 to 185 (SQTLSNSSTI…TKLLGVSLAL (164 aa)). N-linked (GlcNAc...) asparagine glycosylation is found at Asn-27, Asn-115, Asn-174, Asn-274, Asn-277, Asn-287, Asn-326, and Asn-333. A pectinesterase 7 region spans residues 265–564 (VTVSQDGTGN…TVTGLFIEAD (300 aa)). Thr-342 is a substrate binding site. A glycan (N-linked (GlcNAc...) asparagine) is linked at Asn-359. Gln-372 lines the substrate pocket. Catalysis depends on Asp-395, which acts as the Proton donor; for pectinesterase activity. An intrachain disulfide couples Cys-409 to Cys-429. Catalysis depends on Asp-416, which acts as the Nucleophile; for pectinesterase activity. Residues Asn-462 and Asn-475 are each glycosylated (N-linked (GlcNAc...) asparagine). Arg-484 and Trp-486 together coordinate substrate. N-linked (GlcNAc...) asparagine glycans are attached at residues Asn-526, Asn-533, Asn-547, and Asn-553.

In the N-terminal section; belongs to the PMEI family. It in the C-terminal section; belongs to the pectinesterase family. Expressed in siliques.

It localises to the secreted. The protein localises to the cell wall. It catalyses the reaction [(1-&gt;4)-alpha-D-galacturonosyl methyl ester](n) + n H2O = [(1-&gt;4)-alpha-D-galacturonosyl](n) + n methanol + n H(+). The protein operates within glycan metabolism; pectin degradation; 2-dehydro-3-deoxy-D-gluconate from pectin: step 1/5. Functionally, acts in the modification of cell walls via demethylesterification of cell wall pectin. This is Probable pectinesterase/pectinesterase inhibitor 7 (PME7) from Arabidopsis thaliana (Mouse-ear cress).